The primary structure comprises 70 residues: Large ribosomal subunit protein bL28 (70 aa).

The interval 1 to 26 (MAKRCEVCGKAPRSGNTVSHSDKKSG) is disordered.

It belongs to the bacterial ribosomal protein bL28 family.

The protein is Large ribosomal subunit protein bL28 (rpmB) of Thermotoga maritima (strain ATCC 43589 / DSM 3109 / JCM 10099 / NBRC 100826 / MSB8).